Consider the following 298-residue polypeptide: HTH-type transcriptional regulator YhaJ (298 aa).

Residues 7–64 enclose the HTH lysR-type domain; sequence LTLEALRVMDAIDRRGSFAAAADELGRVPSALSYTMQKLEEELDVVLFDRSGHRTKFT. The segment at residues 24–43 is a DNA-binding region (H-T-H motif); sequence FAAAADELGRVPSALSYTMQ.

The protein belongs to the LysR transcriptional regulatory family.

Positive regulator partially required for expression of genes in the locus of effacement (LEE) large pathogenicity island (PAI). Also partially responsible for expression of neighboring gene dlsT (yhaO) during late exponential growth. Binds to DNA of promoter 1 in LEE and DNA from the dlsT promoter region. In Escherichia coli O157:H7, this protein is HTH-type transcriptional regulator YhaJ (yhaJ).